The sequence spans 86 residues: uncharacterized protein (86 aa).

Positions 1–25 are cleaved as a signal peptide; sequence MNLRKILLSSALSLGMLVSAAPVLA.

This is an uncharacterized protein from Bacillus subtilis (strain 168).